Here is a 320-residue protein sequence, read N- to C-terminus: Cytochrome f (320 aa).

Positions Met1–Ala35 are cleaved as a signal peptide. The heme site is built by Tyr36, Cys56, Cys59, and His60. Residues Val286–Lys306 traverse the membrane as a helical segment.

It belongs to the cytochrome f family. The 4 large subunits of the cytochrome b6-f complex are cytochrome b6, subunit IV (17 kDa polypeptide, petD), cytochrome f and the Rieske protein, while the 4 small subunits are PetG, PetL, PetM and PetN. The complex functions as a dimer. It depends on heme as a cofactor.

The protein localises to the plastid. It localises to the chloroplast thylakoid membrane. Functionally, component of the cytochrome b6-f complex, which mediates electron transfer between photosystem II (PSII) and photosystem I (PSI), cyclic electron flow around PSI, and state transitions. This is Cytochrome f from Daucus carota (Wild carrot).